The chain runs to 376 residues: MLTAVCGSLGSQHTEAPHASPPRLDLQPLQTYQGHTSPEAGDYPSPLQPGELQSLPLGPEVDFSQGYELPGASSRVTCEDLESDSPLAPGPFSKLLQPDMSHHYESWFRPTHPGAEDGSWWDLHPGTSWMDLPHTQGALTSPGHPGALQAGLGGYVGDHQLCAPPPHPHAHHLLPAAGGQHLLGPPDGAKALEVAAPESQGLDSSLDGAARPKGSRRSVPRSSGQTVCRCPNCLEAERLGAPCGPDGGKKKHLHNCHIPGCGKAYAKTSHLKAHLRWHSGDRPFVCNWLFCGKRFTRSDELQRHLQTHTGTKKFPCAVCSRVFMRSDHLAKHMKTHEGAKEEAAGAASGEGKAGGAVEPPGGKGKREAEGSVAPSN.

The tract at residues 1–70 (MLTAVCGSLG…VDFSQGYELP (70 aa)) is disordered. The short motif at 118–126 (GSWWDLHPG) is the 9aaTAD element. The disordered stretch occupies residues 167–223 (HPHAHHLLPAAGGQHLLGPPDGAKALEVAAPESQGLDSSLDGAARPKGSRRSVPRSS). Over residues 173–186 (LLPAAGGQHLLGPP) the composition is skewed to low complexity. C2H2-type zinc fingers lie at residues 254-278 (HNCH…LRWH), 284-308 (FVCN…LQTH), and 314-336 (FPCA…MKTH). Over residues 333–343 (MKTHEGAKEEA) the composition is skewed to basic and acidic residues. Residues 333–376 (MKTHEGAKEEAAGAASGEGKAGGAVEPPGGKGKREAEGSVAPSN) are disordered.

This sequence belongs to the Sp1 C2H2-type zinc-finger protein family. As to expression, ubiquitous.

It localises to the nucleus. Functionally, promotes cell proliferation. Plays a role in tooth germ growth. Plays a role in the control of enamel mineralization. Binds the AMBN promoter. This chain is Transcription factor Sp6 (SP6), found in Homo sapiens (Human).